A 333-amino-acid chain; its full sequence is Adenosine deaminase (333 aa).

Residues histidine 12 and histidine 14 each contribute to the Zn(2+) site. Substrate contacts are provided by histidine 14, aspartate 16, and glycine 170. Histidine 197 lines the Zn(2+) pocket. Catalysis depends on glutamate 200, which acts as the Proton donor. Zn(2+) is bound at residue aspartate 278. Residue aspartate 279 participates in substrate binding.

The protein belongs to the metallo-dependent hydrolases superfamily. Adenosine and AMP deaminases family. Adenosine deaminase subfamily. Zn(2+) is required as a cofactor.

The catalysed reaction is adenosine + H2O + H(+) = inosine + NH4(+). It carries out the reaction 2'-deoxyadenosine + H2O + H(+) = 2'-deoxyinosine + NH4(+). Catalyzes the hydrolytic deamination of adenosine and 2-deoxyadenosine. In Shigella dysenteriae serotype 1 (strain Sd197), this protein is Adenosine deaminase.